The sequence spans 305 residues: Aspartate carbamoyltransferase catalytic subunit (305 aa).

The carbamoyl phosphate site is built by arginine 56 and threonine 57. Lysine 85 provides a ligand contact to L-aspartate. The carbamoyl phosphate site is built by arginine 106, histidine 134, and glutamine 137. Positions 167 and 227 each coordinate L-aspartate. The carbamoyl phosphate site is built by leucine 266 and proline 267.

Belongs to the aspartate/ornithine carbamoyltransferase superfamily. ATCase family. Heterooligomer of catalytic and regulatory chains.

It catalyses the reaction carbamoyl phosphate + L-aspartate = N-carbamoyl-L-aspartate + phosphate + H(+). The protein operates within pyrimidine metabolism; UMP biosynthesis via de novo pathway; (S)-dihydroorotate from bicarbonate: step 2/3. Catalyzes the condensation of carbamoyl phosphate and aspartate to form carbamoyl aspartate and inorganic phosphate, the committed step in the de novo pyrimidine nucleotide biosynthesis pathway. This is Aspartate carbamoyltransferase catalytic subunit from Thermoplasma acidophilum (strain ATCC 25905 / DSM 1728 / JCM 9062 / NBRC 15155 / AMRC-C165).